A 611-amino-acid chain; its full sequence is Pyrichalasin H cluster regulator pyiR (611 aa).

A DNA-binding region (zn(2)-C6 fungal-type) is located at residues 11-47 (CDRCRGHKLRCIRLDPGPNDTGALLPCKRCVKAGAEC). 6 disordered regions span residues 53–128 (LSVK…LPPW), 169–192 (ALAAPPGSERSPHRTSRAPSDGTT), 265–291 (GGAGSQSLRDQQMQQHQRHGSASGRSS), 401–427 (AHEGSSTENSAHRRGRGASPTADAAPQ), 521–550 (RGGLGGSSRDESSTEGGDGGGAGSSASDER), and 564–593 (SWFTTTTRGGSGGSGPGEGTGDSNGGRTVE). Basic and acidic residues predominate over residues 59–69 (GDGHHSAHRAT). The segment covering 98-109 (PTQPAPQRQTQR) has biased composition (low complexity). A compositionally biased stretch (polar residues) spans 265–279 (GGAGSQSLRDQQMQQ). The span at 572–587 (GGSGGSGPGEGTGDSN) shows a compositional bias: gly residues.

The protein resides in the nucleus. Functionally, transcription factor that specifically regulates the expression of the gene cluster that mediates the biosynthesis of the mycotoxin pyrichalasin H, a tyrosine-derived cytochalasan that inhibits the growth of rice seedlings, but also inhibits lymphocyte capping and actin polymerization and alters cell morphology. Pyrichalasin H is indicated as the responsible agent for the genus-specific pathogenicity of M.grisea toward crabgrass. The protein is Pyrichalasin H cluster regulator pyiR of Pyricularia grisea (Crabgrass-specific blast fungus).